The following is a 401-amino-acid chain: Inactive leucine-rich repeat receptor-like protein kinase CORYNE (401 aa).

An N-terminal signal peptide occupies residues 1–33; the sequence is MKQRRRRNGCSSSNTISLLLLFFLVFFSRTSTS. At 34–62 the chain is on the extracellular side; it reads TSCRRRTVKHLSTTSTSSTPLESRITSKV. A helical membrane pass occupies residues 63–83; the sequence is IVISIVSGILTGLVSALVLAF. The Cytoplasmic segment spans residues 84–401; it reads LVRSIVKFMK…VHMLTQLHSF (318 aa). One can recognise a Protein kinase domain in the interval 118–401; the sequence is SNGIQLLGSD…VHMLTQLHSF (284 aa). Residues 124–132 and lysine 146 each bind ATP; that span reads LGSDLNGKY.

It belongs to the protein kinase superfamily. Ser/Thr protein kinase family. In terms of assembly, self-interacts. Parts of a tetrameric complex made of two CLV2/CRN heterodimers that can interact with CLV3 and CLE peptides. CLV2/CRN heterodimer interacts with CLV1 homodimers. Interacts with CLV1 and CLV2. CLV2/CRN heterodimer can interact with BAM3. As to expression, present in roots, stems, leaves, inflorescence, flowers and siliques. Mostly expressed in shoot tips and, to a lesser extent, in young organs and roots. Also expressed in the inner tissues of the proximal root meristem. Expressed in the vascular cylinder of root tips, mostly in phloem poles.

Its subcellular location is the cell membrane. The protein resides in the endoplasmic reticulum membrane. Its function is as follows. Involved in the perception of CLV3 and CLV3-like (CLE) peptides, that act as extracellular signals regulating meristem maintenance. Modulates root, shoot and flower apical meristem maintenance and floral organ development regulation, probably via CLAVATA (CLV)-like pathways involving at least CLV3 and CLE19. In complex with CLV2, perceives secreted CLV3-like effector proteins from plant-parasitic cyst nematodes as ligand mimics of the plant CLE signaling pathway. This recognition is required for proper feeding structure (syncytium) development and ultimately successful nematode infection. CLE14 perception by CLV2/CRN complex triggers root meristem differentiation. Required for the sensing of the root CLE peptides (e.g. CLE8, CLE9/CLE10, CLE11, CLE13, CLE14, CLE16, CLE17, CLE18, CLE20, CLE21, CLE25, CLE26, CLE40, CLE41/CLE44 and CLE45), which also involves CLV2 and leads to root growth regulation, mostly in the phloem and protophloem. Promotes the accumulation of BAM3, especially at later stages of protophloem development. The sequence is that of Inactive leucine-rich repeat receptor-like protein kinase CORYNE from Arabidopsis thaliana (Mouse-ear cress).